Consider the following 295-residue polypeptide: Zinc finger transcription factor pqm-1 (295 aa).

Positions 1–23 (MSFLNNDFGSPPATSSPPTTMPK) are disordered. Residues 10-22 (SPPATSSPPTTMP) show a composition bias toward low complexity. A C2H2-type 1; degenerate zinc finger spans residues 161–183 (YMCTVCRKVYGRYNSVSYHVTIY). The C2H2-type 2 zinc finger occupies 227-249 (RKCPHCRHVSKSPAMLEKHIRRH).

It belongs to the krueppel C2H2-type zinc-finger protein family. In terms of assembly, interacts with ceh-60.

The protein localises to the chromosome. The protein resides in the nucleus. It is found in the cytoplasm. In terms of biological role, zinc finger transcription factor which acts as both a transcriptional activator and repressor. Binds to the promoters of genes that contain the 5'-CTTATCA-3' DNA consensus sequence in their regulatory region. Functions downstream of the Insulin/IGF-1-like signaling (IIS) mediated pathway. Involved in normal development, lifespan, stress response, lipid metabolism, innate immunity and exit from the developmentally arrested larval state known as dauer. Required for stress-induced expression of hsp-90 and resistance to heat stress, perhaps as part of a systemic stress signaling pathway. Involved in maintenance of proteostasis. Under hypoxic stress increases lipid levels by positively regulating fatty acid synthesis via fat-7 expression. Associates with homeobox protein ceh-60 at the promoters of some stress-responsive genes to regulate expression; may require phosphorylation for transcriptional repression activity. Acts downstream of nhr-14 to activate transcription of intestinal metal transporter smf-3, modulating innate immunity and iron uptake. May act downstream of the mTORC2 signaling mediated pathway. May act in a mutually exclusive manner with the FOXO transcription factor daf-16. This is Zinc finger transcription factor pqm-1 from Caenorhabditis elegans.